We begin with the raw amino-acid sequence, 413 residues long: Lamin tail domain-containing protein 1 (413 aa).

Disordered stretches follow at residues 1–25 (MMKEASEPLASVTSINKQDSKVQDG) and 102–128 (HKDSSLGKQSTSSMVPRRQPQSSSDVD). Residues 107–128 (LGKQSTSSMVPRRQPQSSSDVD) show a composition bias toward polar residues. The LTD domain maps to 169–287 (EVGQFTSSSL…EAIAWYTPIH (119 aa)). Residues 356–413 (LPNKSPWCRNPNTSPHPYSSLIDSHDSDISESSLDTQLKPQPTKPKPDPGTKKKKAKS) are disordered. The segment covering 385–396 (SESSLDTQLKPQ) has biased composition (low complexity).

The protein belongs to the intermediate filament family.

This Mus musculus (Mouse) protein is Lamin tail domain-containing protein 1 (Lmntd1).